The chain runs to 115 residues: Protein E6A (115 aa).

An N-terminal signal peptide occupies residues 1–25 (MTDKFYFYGLFWGILLFVFLQHMQG).

This Equine herpesvirus 2 (strain 86/87) (EHV-2) protein is Protein E6A (12).